A 307-amino-acid polypeptide reads, in one-letter code: MDEWMNYEQFDRQTWHGFFPTDSVRLTQGNLDEIKSLNDRISIEDVQDVYLPLIKLIQLRYQNFLEWQMQKANFLQRSTMRIPYIIGIAGSVAVGKSTIARLISILLNKMLPDKRVELMTTDGFLYPNAELKRRGIMDRKGFPESYDMERLLKFLNDVKAGEPVVKAPTYSHQVYDVQLDKPLVIDSPDILIVEGINTLQLPSNQQLYVSDYFDWSLYVDADPDLIEHWYLQRFGMLLDTAFTDPSNYYYPYSKGDRQEAFKMAKYVWQRVDLPNLREFILPTKSRADVILHKTTGHVVDKLYLRRG.

90–97 (GSVAVGKS) contacts ATP.

Belongs to the prokaryotic pantothenate kinase family.

The protein resides in the cytoplasm. The enzyme catalyses (R)-pantothenate + ATP = (R)-4'-phosphopantothenate + ADP + H(+). It participates in cofactor biosynthesis; coenzyme A biosynthesis; CoA from (R)-pantothenate: step 1/5. The chain is Pantothenate kinase from Limosilactobacillus reuteri subsp. reuteri (strain JCM 1112) (Lactobacillus reuteri).